The primary structure comprises 475 residues: Tubulin epsilon chain (475 aa).

Position 148-154 (148-154 (GGGTGSG)) interacts with GTP.

The protein belongs to the tubulin family. As to quaternary structure, found in a complex with TEDC1, TEDC2, TUBE1 and TUBD1.

It is found in the cytoplasm. Its subcellular location is the cytoskeleton. The protein resides in the microtubule organizing center. The protein localises to the centrosome. The polypeptide is Tubulin epsilon chain (TUBE1) (Homo sapiens (Human)).